Here is a 146-residue protein sequence, read N- to C-terminus: 1,4-dihydroxy-2-naphthoyl-CoA hydrolase (146 aa).

D19 is an active-site residue.

It belongs to the 4-hydroxybenzoyl-CoA thioesterase family. DHNA-CoA hydrolase subfamily.

It carries out the reaction 1,4-dihydroxy-2-naphthoyl-CoA + H2O = 1,4-dihydroxy-2-naphthoate + CoA + H(+). The protein operates within cofactor biosynthesis; phylloquinone biosynthesis. It functions in the pathway quinol/quinone metabolism; 1,4-dihydroxy-2-naphthoate biosynthesis; 1,4-dihydroxy-2-naphthoate from chorismate: step 7/7. Its function is as follows. Catalyzes the hydrolysis of 1,4-dihydroxy-2-naphthoyl-CoA (DHNA-CoA) to 1,4-dihydroxy-2-naphthoate (DHNA), a reaction involved in phylloquinone (vitamin K1) biosynthesis. The polypeptide is 1,4-dihydroxy-2-naphthoyl-CoA hydrolase (Thermosynechococcus vestitus (strain NIES-2133 / IAM M-273 / BP-1)).